Here is a 491-residue protein sequence, read N- to C-terminus: Cell division control protein 1 (491 aa).

A disordered region spans residues 1–33; sequence MVYRNRSKSVLSTHSKKSDDKAHYKSRSKKKSK. Residues 1-39 lie on the Cytoplasmic side of the membrane; that stretch reads MVYRNRSKSVLSTHSKKSDDKAHYKSRSKKKSKSRSKKR. Positions 24-33 are enriched in basic residues; it reads YKSRSKKKSK. Residues 40-60 form a helical membrane-spanning segment; the sequence is LRIYWRYISIVWILWLGLISY. Residues 61–391 are Extracellular-facing; it reads YESVVVKRAM…LCYMPDPYKA (331 aa). D95, D144, N183, and H323 together coordinate a divalent metal cation. The chain crosses the membrane as a helical span at residues 392–412; sequence IRMYLWGLLFSAAFIAYMHFF. At 413–465 the chain is on the cytoplasmic side; that stretch reads PKSFNNRVATIMNRVFTRPDGNTSDLPLPTSISKSKSKKSLTHSKYAVNDTRS. A helical transmembrane segment spans residues 466–486; the sequence is IKQFLVNAIVLFVSVMPIFIY. Residues 487–491 are Extracellular-facing; sequence FYTVV.

Belongs to the metallophosphoesterase superfamily. MPPE1 family. A divalent metal cation serves as cofactor.

The protein localises to the membrane. Its function is as follows. Probable metallophosphoesterase which may participate in recombinational repair of double -strand breaks. The polypeptide is Cell division control protein 1 (CDC1) (Saccharomyces cerevisiae (strain ATCC 204508 / S288c) (Baker's yeast)).